The chain runs to 267 residues: B3 domain-containing protein At3g11580 (267 aa).

A DNA-binding region (TF-B3) is located at residues 29-143; sequence FEKSLTPSDV…RLFIGWRRRG (115 aa).

The protein localises to the nucleus. This chain is B3 domain-containing protein At3g11580 (ARF32), found in Arabidopsis thaliana (Mouse-ear cress).